We begin with the raw amino-acid sequence, 40 residues long: uncharacterized protein (40 aa).

Residues 1 to 14 (MNRMLSLSVQSQRA) are compositionally biased toward polar residues. Residues 1-25 (MNRMLSLSVQSQRAPASPSPYGLKI) are disordered.

This is an uncharacterized protein from Treponema pallidum (strain Nichols).